The chain runs to 449 residues: MGSDVRDLNALLPAVPSLGGGGGCALPVSGAAQWAPVLDFAPPGASAYGSLGGPAPPPAPPPPPPPPPHSFIKQEPSWGGAEPHEEQCLSAFTVHFSGQFTGTAGACRYGPFGPPPPSQASSGQARMFPNAPYLPSCLESQPAIRNQGYSTVTFDGTPSYGHTPSHHAAQFPNHSFKHEDPMGQQGSLGEQQYSVPPPVYGCHTPTDSCTGSQALLLRTPYSSDNLYQMTSQLECMTWNQMNLGATLKGVAAGSSSSVKWTEGQSNHSTGYESDNHTTPILCGAQYRIHTHGVFRGIQDVRRVPGVAPTLVRSASETSEKRPFMCAYPGCNKRYFKLSHLQMHSRKHTGEKPYQCDFKDCERRFSRSDQLKRHQRRHTGVKPFQCKTCQRKFSRSDHLKTHTRTHTGKTSEKPFSCRWPSCQKKFARSDELVRHHNMHQRNMTKLQLAL.

Residues 48-84 are disordered; the sequence is YGSLGGPAPPPAPPPPPPPPPHSFIKQEPSWGGAEPH. Pro residues predominate over residues 54 to 69; that stretch reads PAPPPAPPPPPPPPPH. Residues Lys73 and Lys177 each participate in a glycyl lysine isopeptide (Lys-Gly) (interchain with G-Cter in SUMO) cross-link. A 9aaTAD motif is present at residues 236-244; that stretch reads MTWNQMNLG. 3 C2H2-type zinc fingers span residues 323 to 347, 353 to 377, and 383 to 405; these read FMCA…SRKH, YQCD…QRRH, and FQCK…TRTH. Important for interaction with target DNA regions lie at residues 367-381 and 393-401; these read SDQL…TGVK and SRSDHLKTH. The KTS motif motif lies at 408–410; sequence KTS. A C2H2-type 4 zinc finger spans residues 414-438; it reads FSCRWPSCQKKFARSDELVRHHNMH. Residue Lys444 forms a Glycyl lysine isopeptide (Lys-Gly) (interchain with G-Cter in SUMO2) linkage.

Belongs to the EGR C2H2-type zinc-finger protein family. Homodimer. Interacts with WTIP. Interacts with actively translating polysomes. Detected in nuclear ribonucleoprotein (mRNP) particles. Interacts with HNRNPU via the zinc-finger region. Interacts with U2AF2. Interacts with CITED2. Interacts with ZNF224 via the zinc-finger region. Interacts with WTAP and SRY. Interacts with AMER1. Interacts with RBM4. Expressed in the kidney and a subset of hematopoietic cells.

It localises to the nucleus. It is found in the nucleolus. The protein localises to the cytoplasm. Its subcellular location is the nucleus speckle. The protein resides in the nucleoplasm. Its function is as follows. Transcription factor that plays an important role in cellular development and cell survival. Recognizes and binds to the DNA sequence 5'-GCG(T/G)GGGCG-3'. Regulates the expression of numerous target genes, including EPO. Plays an essential role for development of the urogenital system. It has a tumor suppressor as well as an oncogenic role in tumor formation. Function may be isoform-specific: isoforms lacking the KTS motif may act as transcription factors. Isoforms containing the KTS motif may bind mRNA and play a role in mRNA metabolism or splicing. Isoform 1 has lower affinity for DNA, and can bind RNA. The protein is Wilms tumor protein (WT1) of Homo sapiens (Human).